Reading from the N-terminus, the 320-residue chain is Acetyl-coenzyme A carboxylase carboxyl transferase subunit beta (320 aa).

Residues 25–294 (VWTKCDSCGQ…AKDEDELLGE (270 aa)) form the CoA carboxyltransferase N-terminal domain. Residues C29, C32, C48, and C51 each contribute to the Zn(2+) site. Residues 29 to 51 (CDSCGQVLYRAELERNLEVCPKC) form a C4-type zinc finger. Acidic residues predominate over residues 295 to 310 (EMIADDIESSDNEPEI). The disordered stretch occupies residues 295-320 (EMIADDIESSDNEPEINIETNKKEDV).

It belongs to the AccD/PCCB family. Acetyl-CoA carboxylase is a heterohexamer composed of biotin carboxyl carrier protein (AccB), biotin carboxylase (AccC) and two subunits each of ACCase subunit alpha (AccA) and ACCase subunit beta (AccD). Zn(2+) serves as cofactor.

It localises to the cytoplasm. The catalysed reaction is N(6)-carboxybiotinyl-L-lysyl-[protein] + acetyl-CoA = N(6)-biotinyl-L-lysyl-[protein] + malonyl-CoA. Its pathway is lipid metabolism; malonyl-CoA biosynthesis; malonyl-CoA from acetyl-CoA: step 1/1. Functionally, component of the acetyl coenzyme A carboxylase (ACC) complex. Biotin carboxylase (BC) catalyzes the carboxylation of biotin on its carrier protein (BCCP) and then the CO(2) group is transferred by the transcarboxylase to acetyl-CoA to form malonyl-CoA. This is Acetyl-coenzyme A carboxylase carboxyl transferase subunit beta from Proteus mirabilis (strain HI4320).